Reading from the N-terminus, the 183-residue chain is Small ribosomal subunit protein uS4 (183 aa).

The 63-residue stretch at 106 to 168 (RRLQTQVYRQ…AGSPLAREGH (63 aa)) folds into the S4 RNA-binding domain.

This sequence belongs to the universal ribosomal protein uS4 family. As to quaternary structure, part of the 30S ribosomal subunit. Contacts protein S5. The interaction surface between S4 and S5 is involved in control of translational fidelity.

Its function is as follows. One of the primary rRNA binding proteins, it binds directly to 16S rRNA where it nucleates assembly of the body of the 30S subunit. With S5 and S12 plays an important role in translational accuracy. The polypeptide is Small ribosomal subunit protein uS4 (Methanothrix thermoacetophila (strain DSM 6194 / JCM 14653 / NBRC 101360 / PT) (Methanosaeta thermophila)).